A 145-amino-acid chain; its full sequence is MIALIQRVSEAKVVVDGATIGEIDRGLLVLLGVEREDNIEKMQKLATKVMSYRVFSDENGKMNLNLEQAGGSLLVVSQFTLAADTGRGLRPSFSGAGTPEQARELYEAFIDFCKSKGVNTQTGQFAADMKVSLVNDGPVTFNLQV.

Residues 137–138 (GP) carry the Gly-cisPro motif, important for rejection of L-amino acids motif.

It belongs to the DTD family. As to quaternary structure, homodimer.

The protein localises to the cytoplasm. The enzyme catalyses glycyl-tRNA(Ala) + H2O = tRNA(Ala) + glycine + H(+). The catalysed reaction is a D-aminoacyl-tRNA + H2O = a tRNA + a D-alpha-amino acid + H(+). In terms of biological role, an aminoacyl-tRNA editing enzyme that deacylates mischarged D-aminoacyl-tRNAs. Also deacylates mischarged glycyl-tRNA(Ala), protecting cells against glycine mischarging by AlaRS. Acts via tRNA-based rather than protein-based catalysis; rejects L-amino acids rather than detecting D-amino acids in the active site. By recycling D-aminoacyl-tRNA to D-amino acids and free tRNA molecules, this enzyme counteracts the toxicity associated with the formation of D-aminoacyl-tRNA entities in vivo and helps enforce protein L-homochirality. In Shewanella halifaxensis (strain HAW-EB4), this protein is D-aminoacyl-tRNA deacylase.